Consider the following 227-residue polypeptide: Ribose-5-phosphate isomerase A (227 aa).

Residues 26-29, 82-85, and 95-98 contribute to the substrate site; these read TGST, DGAD, and KGGG. Residue Glu-104 is the Proton acceptor of the active site. Lys-122 provides a ligand contact to substrate.

Belongs to the ribose 5-phosphate isomerase family. As to quaternary structure, homodimer.

It carries out the reaction aldehydo-D-ribose 5-phosphate = D-ribulose 5-phosphate. It functions in the pathway carbohydrate degradation; pentose phosphate pathway; D-ribose 5-phosphate from D-ribulose 5-phosphate (non-oxidative stage): step 1/1. Functionally, catalyzes the reversible conversion of ribose-5-phosphate to ribulose 5-phosphate. This is Ribose-5-phosphate isomerase A from Streptococcus pneumoniae (strain ATCC 700669 / Spain 23F-1).